A 274-amino-acid polypeptide reads, in one-letter code: NH(3)-dependent NAD(+) synthetase (274 aa).

ATP is bound at residue G46–S53. Residue D52 participates in Mg(2+) binding. R140 lines the deamido-NAD(+) pocket. T160 serves as a coordination point for ATP. E165 provides a ligand contact to Mg(2+). Positions 173 and 180 each coordinate deamido-NAD(+). ATP is bound by residues K189 and T211. Deamido-NAD(+) is bound at residue H260 to K261.

It belongs to the NAD synthetase family. Homodimer.

The catalysed reaction is deamido-NAD(+) + NH4(+) + ATP = AMP + diphosphate + NAD(+) + H(+). The protein operates within cofactor biosynthesis; NAD(+) biosynthesis; NAD(+) from deamido-NAD(+) (ammonia route): step 1/1. Functionally, catalyzes the ATP-dependent amidation of deamido-NAD to form NAD. Uses ammonia as a nitrogen source. This chain is NH(3)-dependent NAD(+) synthetase, found in Streptococcus equi subsp. zooepidemicus (strain H70).